The chain runs to 255 residues: 4-hydroxy-tetrahydrodipicolinate reductase (255 aa).

NAD(+) contacts are provided by residues 13–18, 90–92, and 114–117; these read GCNGKM, CTT, and SANM. The active-site Proton donor/acceptor is the H147. H148 serves as a coordination point for (S)-2,3,4,5-tetrahydrodipicolinate. K151 serves as the catalytic Proton donor. 157–158 serves as a coordination point for (S)-2,3,4,5-tetrahydrodipicolinate; the sequence is GT.

It belongs to the DapB family.

It is found in the cytoplasm. The enzyme catalyses (S)-2,3,4,5-tetrahydrodipicolinate + NAD(+) + H2O = (2S,4S)-4-hydroxy-2,3,4,5-tetrahydrodipicolinate + NADH + H(+). It carries out the reaction (S)-2,3,4,5-tetrahydrodipicolinate + NADP(+) + H2O = (2S,4S)-4-hydroxy-2,3,4,5-tetrahydrodipicolinate + NADPH + H(+). The protein operates within amino-acid biosynthesis; L-lysine biosynthesis via DAP pathway; (S)-tetrahydrodipicolinate from L-aspartate: step 4/4. Its function is as follows. Catalyzes the conversion of 4-hydroxy-tetrahydrodipicolinate (HTPA) to tetrahydrodipicolinate. This Clostridium tetani (strain Massachusetts / E88) protein is 4-hydroxy-tetrahydrodipicolinate reductase.